We begin with the raw amino-acid sequence, 99 residues long: Large ribosomal subunit protein eL21 (99 aa).

Belongs to the eukaryotic ribosomal protein eL21 family.

This Ignicoccus hospitalis (strain KIN4/I / DSM 18386 / JCM 14125) protein is Large ribosomal subunit protein eL21.